The chain runs to 1118 residues: MTDVSSPAGGAASPVEMSTTSSSSAATTSASSSKPLTNGANKTAISTAAGGVTPGAVPGPGSGAIPASSSSGNQVKLEHHHRQSNNNRPAVTNRSSETKLMTPTGSSSSPSQSPSQTQASIQTQTSQQDRLAKASTTASQQDVDEVARLFEEKPEAFEKWLTERAPPEALSRLQEFIENRKPHKRPSVTSDLFQQWMAASPTVQQKSPRSLSNSSASSLPECRRHLMDLDEGELFMELIRDVANELDIDVLCHKILVNVGLLTHADRGSLFLAKGTPTNKYLVAKLFDVTQKTALKDAVTRASAEEIIIPFGIGIAGMVAQTKQMINIKEAYKDARFNCEIDLKTGYKTNAILCMPICNYEGDIIGVAQIINKTNGCMEFDEHDVEIFRRYLTFCGIGIQNAQLFEMSVQEYRRNQILLNLARSIFEEQNNLECLVTKIMTEARELLKCERCSVFLVDLDCCEASHLEKIIEKPNQPATRAIKSADSFEEKKMRNRFTVLFELGGEYQAANVSRPSVSELSSSTLAQIAQFVATTGQTVNICDVIEWVRDHNQIRAEDEIDSTQAILCMPIMNAQKKVIGVAQLINKANGVPFTDSDASIFEAFAIFCGLGIHNTQMYENACKLMAKQKVALECLSYHATASQDQTEKLTQDVIAEAESYNLYSFTFTDFELVDDDTCRAVLRMFMQCNLVSQFQIPYDVLCRWVLSVRKNYRPVKYHNWRHALNVAQTMFAMLKTGKMERFMTDLEILGLLVACLCHDLDHRGTNNAFQTKTESPLAILYTTSTMEHHHFDQCVMILNSEGNNIFQALSPEDYRSVMKTVESAILSTDLAMYFKKRNAFLELVENGEFDWQGEEKKDLLCGMMMTACDVSAIAKPWEVQHKVAKLVADEFFDQGDLEKLQLNTQPVAMMDRERKDELPKMQVGFIDVICLPLYRVLCDTFPWITPLYEGTLENRRNWQDLAEKVEMGLTWIDHDTIDKPVEEFAACADEEIKDIEFTVTTLNCNQQSQHGSEDSHTPEHQRSGSRLSMKKTGALGKAVRSKLSKTLYNSMDGSKPKTSLKLLESHVSEDMDDKSPTSPSQPQASGSMGRMSASSSTSSAGGQMVDKSKKRSKLCALL.

The interval 1-142 (MTDVSSPAGG…KASTTASQQD (142 aa)) is disordered. Positions 18-33 (STTSSSSAATTSASSS) are enriched in low complexity. Residues 34–45 (KPLTNGANKTAI) are compositionally biased toward polar residues. 2 stretches are compositionally biased toward low complexity: residues 46–56 (STAAGGVTPGA) and 63–72 (GAIPASSSSG). The segment covering 84 to 101 (SNNNRPAVTNRSSETKLM) has biased composition (polar residues). Over residues 102–128 (TPTGSSSSPSQSPSQTQASIQTQTSQQ) the composition is skewed to low complexity. 2 GAF domains span residues 247–399 (DIDV…GIGI) and 431–612 (NLEC…GLGI). A PDEase domain is found at 642 to 965 (SQDQTEKLTQ…RNWQDLAEKV (324 aa)). Histidine 718 acts as the Proton donor in catalysis. A divalent metal cation is bound by residues histidine 722, histidine 758, aspartate 759, and aspartate 869. Disordered stretches follow at residues 1006–1035 (QQSQHGSEDSHTPEHQRSGSRLSMKKTGAL) and 1065–1118 (SHVS…CALL). Basic and acidic residues-rich tracts occupy residues 1011–1022 (GSEDSHTPEHQR) and 1065–1075 (SHVSEDMDDKS). Residues 1084–1104 (ASGSMGRMSASSSTSSAGGQM) show a composition bias toward low complexity. Residues 1108-1118 (SKKRSKLCALL) are compositionally biased toward basic residues. Position 1115 is a cysteine methyl ester (cysteine 1115). A lipid anchor (S-farnesyl cysteine) is attached at cysteine 1115. Residues 1116-1118 (ALL) constitute a propeptide, removed in mature form.

This sequence belongs to the cyclic nucleotide phosphodiesterase family. Interacts with PrBP. Requires a divalent metal cation as cofactor. As to expression, expressed in Malpighian tubule principal cells. Also expressed in adult head.

The protein localises to the cell membrane. It carries out the reaction 3',5'-cyclic GMP + H2O = GMP + H(+). Inhibited by sildenafil and zaprinast. Hydrolyzes the second messenger cGMP, which is a key regulator of many important physiological processes. Has cAMP phosphodiesterase activity in vitro but not in vivo. Has a role regulating cGMP transport in Malpighian tubule principal cells. This is cGMP-specific 3',5'-cyclic phosphodiesterase (Pde6) from Drosophila melanogaster (Fruit fly).